Consider the following 634-residue polypeptide: TATA box-binding protein-associated factor RNA polymerase I subunit B (634 aa).

The RRN7-type zinc-finger motif lies at 19–51 (LVCEYCGHGSEYAEDDADNGFFTCRQCSAIHTS). 4 residues coordinate Zn(2+): Cys-21, Cys-24, Cys-42, and Cys-45. The B-reader stretch occupies residues 51 to 80 (STQNTATNPFDFPMTPAHLSAHRRPTQPTP). The segment at 56–117 (ATNPFDFPMT…EPRDFATGAN (62 aa)) is disordered. The segment covering 77 to 87 (QPTPTPKPFPA) has biased composition (pro residues). The segment at 81–83 (TPK) is B-linker. Residues 84 to 281 (PFPAPRGAAT…DKLLGSSLND (198 aa)) form an N-terminal cyclin fold region. Positions 88-98 (PRGAATGAAAP) are enriched in low complexity. Residues 282 to 284 (CPL) are C-terminal cyclin fold.

The protein belongs to the RRN7/TAF1B family.

Its subcellular location is the nucleus. It is found in the nucleolus. Functionally, component of RNA polymerase I core factor complex that acts as a GTF2B/TFIIB-like factor and plays a key role in multiple steps during transcription initiation such as pre-initiation complex (PIC) assembly and postpolymerase recruitment events in polymerase I (Pol I) transcription. Binds rDNA promoters and plays a role in Pol I recruitment. The protein is TATA box-binding protein-associated factor RNA polymerase I subunit B of Oryza sativa subsp. indica (Rice).